An 80-amino-acid chain; its full sequence is Exodeoxyribonuclease 7 small subunit (80 aa).

This sequence belongs to the XseB family. Heterooligomer composed of large and small subunits.

The protein resides in the cytoplasm. It carries out the reaction Exonucleolytic cleavage in either 5'- to 3'- or 3'- to 5'-direction to yield nucleoside 5'-phosphates.. Bidirectionally degrades single-stranded DNA into large acid-insoluble oligonucleotides, which are then degraded further into small acid-soluble oligonucleotides. The protein is Exodeoxyribonuclease 7 small subunit of Escherichia coli (strain SE11).